A 227-amino-acid chain; its full sequence is Thymidylate kinase (227 aa).

ATP is bound at residue 7-14 (GIEGSGKT).

Belongs to the thymidylate kinase family.

The catalysed reaction is dTMP + ATP = dTDP + ADP. Phosphorylation of dTMP to form dTDP in both de novo and salvage pathways of dTTP synthesis. This chain is Thymidylate kinase, found in Desulforapulum autotrophicum (strain ATCC 43914 / DSM 3382 / VKM B-1955 / HRM2) (Desulfobacterium autotrophicum).